The primary structure comprises 338 residues: tRNA (cytosine(34)-C(5))-methyltransferase, mitochondrial (338 aa).

S-adenosyl-L-methionine contacts are provided by residues 140-146 (CAAPGGK), E163, D194, and D212. The Nucleophile role is filled by C266.

The protein belongs to the class I-like SAM-binding methyltransferase superfamily. RsmB/NOP family.

The protein localises to the mitochondrion matrix. The enzyme catalyses cytidine(34) in mitochondrial tRNA + S-adenosyl-L-methionine = 5-methylcytidine(34) in mitochondrial tRNA + S-adenosyl-L-homocysteine + H(+). Its function is as follows. Mitochondrial tRNA methyltransferase that mediates methylation of cytosine to 5-methylcytosine (m5C) at position 34 of mt-tRNA(Met). mt-tRNA(Met) methylation at cytosine(34) takes place at the wobble position of the anticodon and initiates the formation of 5-formylcytosine (f(5)c) at this position. mt-tRNA(Met) containing the f(5)c modification at the wobble position enables recognition of the AUA codon in addition to the AUG codon, expanding codon recognition in mitochondrial translation. This Bos taurus (Bovine) protein is tRNA (cytosine(34)-C(5))-methyltransferase, mitochondrial.